The primary structure comprises 330 residues: DNA repair and recombination protein RadA (330 aa).

124–131 (GEFGSGKT) provides a ligand contact to ATP.

Belongs to the eukaryotic RecA-like protein family.

In terms of biological role, involved in DNA repair and in homologous recombination. Binds and assemble on single-stranded DNA to form a nucleoprotein filament. Hydrolyzes ATP in a ssDNA-dependent manner and promotes DNA strand exchange between homologous DNA molecules. This Pyrobaculum neutrophilum (strain DSM 2338 / JCM 9278 / NBRC 100436 / V24Sta) (Thermoproteus neutrophilus) protein is DNA repair and recombination protein RadA.